The chain runs to 164 residues: Transcription elongation factor GreA (164 aa).

Positions 15 to 76 form a coiled coil; the sequence is DRLKNELDQL…LQELLNSAKV (62 aa).

It belongs to the GreA/GreB family.

Necessary for efficient RNA polymerase transcription elongation past template-encoded arresting sites. The arresting sites in DNA have the property of trapping a certain fraction of elongating RNA polymerases that pass through, resulting in locked ternary complexes. Cleavage of the nascent transcript by cleavage factors such as GreA or GreB allows the resumption of elongation from the new 3'terminus. GreA releases sequences of 2 to 3 nucleotides. In Rhodococcus erythropolis (strain PR4 / NBRC 100887), this protein is Transcription elongation factor GreA.